Consider the following 280-residue polypeptide: 23S rRNA (guanine(748)-N(1))-methyltransferase (280 aa).

Residues Cys-11, Cys-14, Cys-27, and His-31 each contribute to the Zn(2+) site. S-adenosyl-L-methionine contacts are provided by residues Tyr-70, 100-101 (TG), and His-188.

It belongs to the methyltransferase superfamily. RlmA family.

The enzyme catalyses guanosine(748) in 23S rRNA + S-adenosyl-L-methionine = N(1)-methylguanosine(748) in 23S rRNA + S-adenosyl-L-homocysteine + H(+). Specifically methylates the guanosine in position 748 of 23S rRNA. Confers resistance to the macrolide antibiotic tylosine. The sequence is that of 23S rRNA (guanine(748)-N(1))-methyltransferase (rlmAII) from Streptomyces fradiae (Streptomyces roseoflavus).